Consider the following 563-residue polypeptide: Germacrene-A synthase (563 aa).

Residues Asp-316, Asp-320, Asp-461, and Glu-469 each contribute to the Mg(2+) site. The short motif at 316–320 is the DDXXD motif element; it reads DDIYD.

It belongs to the terpene synthase family. Tpsa subfamily. Requires Mg(2+) as cofactor. In terms of tissue distribution, expressed in young leaves. Detected in trichomes and cones.

The catalysed reaction is (2E,6E)-farnesyl diphosphate = (+)-(R)-germacrene A + diphosphate. It participates in secondary metabolite biosynthesis; terpenoid biosynthesis. Sesquiterpene synthase that catalyzes the formation of germacrene A. Can use farnesyl diphosphate as substrate, but not geranyl diphosphate or geranylgeranyl diphosphate. Beta-elemene, the initially measured product in the assay, is derived nonenzymatically from germacrene A. The protein is Germacrene-A synthase of Humulus lupulus (European hop).